Here is a 345-residue protein sequence, read N- to C-terminus: Transcription factor STKL1 (345 aa).

Positions 1–145 are disordered; sequence MASLENPAID…KKGHAQRVWS (145 aa). Residues 11–22 are compositionally biased toward low complexity; it reads SSSEFESSSEEI. Over residues 23–32 the composition is skewed to basic and acidic residues; sequence SSSKESKPKE. Residues 37 to 46 show a composition bias toward polar residues; it reads VPSTKTLNSP. Position 105 is a phosphoserine (S105). A compositionally biased stretch (basic and acidic residues) spans 114 to 137; the sequence is RASEGTTSRDMHVKRIKKEGDNKK.

Belongs to the GeBP family. Expressed strongly in leaves and flowers, weakly in roots, and very weakly in stems.

The protein localises to the nucleus. Its function is as follows. Transcription repressor that binds DNA in a sequence-specific manner, 5'-GCCT-3', to regulate the expression of PGR. Acts as a modulatory component for the glucose-triggered developmental leaf growth process. This Arabidopsis thaliana (Mouse-ear cress) protein is Transcription factor STKL1.